We begin with the raw amino-acid sequence, 498 residues long: Glycerol kinase (498 aa).

Position 11 (threonine 11) interacts with ADP. ATP contacts are provided by threonine 11, serine 12, and serine 13. Residue threonine 11 coordinates sn-glycerol 3-phosphate. Arginine 15 contacts ADP. Residues arginine 81, glutamate 82, tyrosine 133, and aspartate 242 each coordinate sn-glycerol 3-phosphate. Residues arginine 81, glutamate 82, tyrosine 133, aspartate 242, and glutamine 243 each contribute to the glycerol site. 2 residues coordinate ADP: threonine 264 and glycine 307. Residues threonine 264, glycine 307, glutamine 311, and glycine 412 each contribute to the ATP site. Positions 412 and 416 each coordinate ADP.

This sequence belongs to the FGGY kinase family.

The enzyme catalyses glycerol + ATP = sn-glycerol 3-phosphate + ADP + H(+). The protein operates within polyol metabolism; glycerol degradation via glycerol kinase pathway; sn-glycerol 3-phosphate from glycerol: step 1/1. Its activity is regulated as follows. Inhibited by fructose 1,6-bisphosphate (FBP). In terms of biological role, key enzyme in the regulation of glycerol uptake and metabolism. Catalyzes the phosphorylation of glycerol to yield sn-glycerol 3-phosphate. The polypeptide is Glycerol kinase (Acidovorax sp. (strain JS42)).